Here is a 127-residue protein sequence, read N- to C-terminus: Small ribosomal subunit protein uS12m (127 aa).

Belongs to the universal ribosomal protein uS12 family.

It localises to the mitochondrion. The protein is Small ribosomal subunit protein uS12m (RPS12) of Acanthamoeba castellanii (Amoeba).